Consider the following 472-residue polypeptide: Probable sterol O-acyltransferase 2 (472 aa).

Ser12 is modified (phosphoserine). 3 helical membrane-spanning segments follow: residues 61 to 81 (FTGFFVLFWVAVSIMIFMSFL), 111 to 131 (LAMSSMFLLAFPFQKIFALGY), and 135 to 155 (YGLGVYLYSILILLFLSHCVL). The N-linked (GlcNAc...) asparagine glycan is linked to Asn161. The chain crosses the membrane as a helical span at residues 170–190 (FILHSMVILMKLHSYNVVNGW). A glycan (N-linked (GlcNAc...) asparagine) is linked at Asn233. Helical transmembrane passes span 262 to 282 (IHYLIECALGTFGCIFLLVII) and 317 to 337 (TVAFLMFPFMLSFLLVFWVIF). N-linked (GlcNAc...) asparagine glycosylation occurs at Asn342. The FYXDWWN motif signature appears at 355-361 (FYDDWWN). His409 is a catalytic residue. The chain crosses the membrane as a helical span at residues 452-472 (IAFWFSIIIGIALIAALYILF).

The protein belongs to the membrane-bound acyltransferase family. Sterol o-acyltransferase subfamily.

The protein resides in the endoplasmic reticulum membrane. Functionally, sterol O-acyltransferase that catalyzes the formation of stery esters. In Schizosaccharomyces pombe (strain 972 / ATCC 24843) (Fission yeast), this protein is Probable sterol O-acyltransferase 2 (are2).